Consider the following 315-residue polypeptide: Prephenate dehydratase (315 aa).

In terms of domain architecture, Prephenate dehydratase spans 3-189; sequence RIAYLGPEGT…ARTRFLLIGV (187 aa). One can recognise an ACT domain in the interval 203–280; the sequence is SVVLRIANVP…ADVRYLGSWP (78 aa).

Homodimer.

The catalysed reaction is prephenate + H(+) = 3-phenylpyruvate + CO2 + H2O. It participates in amino-acid biosynthesis; L-phenylalanine biosynthesis; phenylpyruvate from prephenate: step 1/1. This is Prephenate dehydratase (pheA) from Mycobacterium marinum (strain ATCC BAA-535 / M).